Consider the following 500-residue polypeptide: Cytochrome P450 monooxygenase hepD (500 aa).

A helical membrane pass occupies residues 15-35 (WILLSLSLAFIVVYSLFYLAV). N-linked (GlcNAc...) asparagine glycosylation is found at asparagine 99, asparagine 185, asparagine 373, and asparagine 409. Cysteine 445 is a binding site for heme. Residue asparagine 482 is glycosylated (N-linked (GlcNAc...) asparagine).

It belongs to the cytochrome P450 family. It depends on heme as a cofactor.

It localises to the membrane. Its pathway is secondary metabolite biosynthesis. In terms of biological role, cytochrome P450 monooxygenase; part of the gene cluster that mediates the biosynthesis of heptelidic acid (HA), a sesquiterpene lactone that acts as an inhibitor of glyceraldehyde-3-phosphatedehydrogenase (GAPDH) and a growth inhibitor of the salt-tolerant lactic acid bacteria in soy sauce brewing. This Aspergillus oryzae (strain ATCC 42149 / RIB 40) (Yellow koji mold) protein is Cytochrome P450 monooxygenase hepD.